We begin with the raw amino-acid sequence, 515 residues long: Cytochrome P450 monooxygenase nsrP (515 aa).

The helical transmembrane segment at 20–40 (FGTAAFLAVLLSALAFLSYTP) threads the bilayer. Residues Asn-84, Asn-406, and Asn-411 are each glycosylated (N-linked (GlcNAc...) asparagine). Residue Cys-452 coordinates heme.

Belongs to the cytochrome P450 family. It depends on heme as a cofactor.

It is found in the membrane. It functions in the pathway secondary metabolite biosynthesis. Cytochrome P450 monooxygenase; part of the gene cluster that mediates the biosynthesis of the tetrahydroxanthone dimer neosartorin, which exhibits antibacterial activity. The two different monomeric units appear to be synthesized by the same set of enzymes, among which the Baeyer-Villiger monooxygenase nsrF is the key enzyme for the divergence of the biosynthetic routes. The pathway begins with the synthesis of atrochrysone thioester by the polyketide synthase nsrB. The atrochrysone carboxyl ACP thioesterase nsrC then breaks the thioester bond and releases the atrochrysone carboxylic acid from AacuL. Atrochrysone carboxylic acid is decarboxylated by the decarboxylase nsrE, and oxidized by the anthrone oxygenase nsrD to yield emodin. Emodin is then reduced to emodin hydroquinone by the oxidoreductase nsrR. A-ring reduction by the short chain dehydrogenase nsrJ, dehydration by the scytalone dehydratase-like protein nsrI and probable spontaneous re-oxidation, results in overall deoxygenation to chrysophanol. The Baeyer-Villiger monooxygenase nsrF accepts chrysophanol as a substrate to insert one oxygen atom at two different positions to yield the precursors of both monomric units. NsrF is promiscuous/flexible in interacting with the 2 (non methylated and methylated) aromatic rings of chrysophanol, thus diverging the biosynthetic pathway at this point. After the hydrolysis of the lactones, methylesterification by the methyltransferase nsrG yields respectively moniliphenone and 2,2',6'-trihydroxy-4-methyl-6-methoxya-cyldiphenylmethanone. The next steps are the hydroxylation by the FAD-dependent monooxygenase nsrK, followed by isomerization by the monooxygenase nsrQ. The short chain dehydrogenase/reductase nsrO then catalyzes the C-5 ketoreduction to give the xanthone skeleton of blennolide C and 5-acetylblennolide A. The acetyltransferase nsrL has a strict substrate specificity and uses only blennolide A but not blennolide C to yield 5-acetylblennolide A as the single-acetylated product. In the final step of the biosynthesis, the heterodimerization of the 2 xanthones, blennolide C and 5-acetylblennolide A, is catalyzed by the cytochrome P450 monooxygenase nsrP. NsrP can utilize at least three different xanthones as its substrates to perform the dimerization reaction. The chain is Cytochrome P450 monooxygenase nsrP from Aspergillus novofumigatus (strain IBT 16806).